Reading from the N-terminus, the 276-residue chain is Protein HemX (276 aa).

8 helical membrane-spanning segments follow: residues 9 to 29, 40 to 60, 66 to 86, 93 to 113, 132 to 152, 187 to 207, 217 to 237, and 247 to 267; these read LNEG…IDFL, FWLL…FMWV, VLNV…LSLV, VDFI…IHTF, LVIH…SFVF, VLNV…VIWA, FDAK…YLYI, and VAAL…FLLG.

The protein to M.leprae U1620K.

It localises to the cell membrane. Its function is as follows. Required for HemL synthesis. The polypeptide is Protein HemX (hemX) (Bacillus subtilis (strain 168)).